A 1334-amino-acid chain; its full sequence is WASH complex subunit 2 (1334 aa).

Residues 1-219 (MNRTSPDSER…VGSDRGSIVD (219 aa)) form a sufficient for interaction with WASHC3, WASHC4 and WASHC5; required for interaction with WASHC1 region. Phosphoserine is present on residues Ser-157, Ser-159, Ser-204, Ser-205, and Ser-209. The segment covering 201–213 (GELSSEEGSVGSD) has biased composition (low complexity). The tract at residues 201–471 (GELSSEEGSV…SKPSKTDKVK (271 aa)) is disordered. 2 stretches are compositionally biased toward acidic residues: residues 219–232 (DSED…SDED) and 249–274 (SDEE…EDIE). Residue Ser-284 is modified to Phosphoserine. The segment covering 289 to 324 (LAARIKGDISNQRKEGQTDGKPQKTVKEKKERRTPA) has biased composition (basic and acidic residues). Thr-322 is subject to Phosphothreonine. The segment at 347–594 (SRGGLFSNGQ…QTSSLQPQSQ (248 aa)) is sufficient for interaction with CCDC93. The tract at residues 348–1334 (RGGLFSNGQG…DDPLNAFGSQ (987 aa)) is interaction with VPS35. The LFa 1 motif lies at 358 to 368 (LFDDEDESDLF). The residue at position 388 (Ser-388) is a Phosphoserine. 2 consecutive short sequence motifs (LFa) follow at residues 441–457 (LFDD…NNFF) and 476–485 (IFDDDEGDLF). The span at 442 to 454 (FDDDDNDNDEDDN) shows a compositional bias: acidic residues. The disordered stretch occupies residues 492 to 650 (LPAASVSQTH…DSGATQGQEA (159 aa)). The span at 513–530 (LPSSKNLKLVSETKTQKG) shows a compositional bias: polar residues. Short sequence motifs (LFa) lie at residues 531-542 (LFSDEEDSEDLF) and 566-577 (LFGDEDEEDSLF). Ser-533 and Ser-538 each carry phosphoserine. The span at 541–561 (LFSSQSSSKPKSASLPSSQPP) shows a compositional bias: low complexity. 2 stretches are compositionally biased toward polar residues: residues 584-594 (KQTSSLQPQSQ) and 601-611 (EQPSKKTSALL). Residues Ser-613 and Ser-614 each carry the phosphoserine modification. Over residues 625-639 (SHTKLASDNKSKGEL) the composition is skewed to basic and acidic residues. 2 consecutive short sequence motifs (LFa) follow at residues 658-670 (LFED…VDLF) and 686-698 (LFED…SSLF). Positions 691 to 837 (AESGSSLFGL…SRPKSTGVFQ (147 aa)) are disordered. A phosphoserine mark is found at Ser-723, Ser-747, Ser-752, Ser-783, and Ser-798. Over residues 800-811 (FDEDEDKVEDES) the composition is skewed to acidic residues. Residues 818–830 (DGREKGLKTDSRP) are compositionally biased toward basic and acidic residues. 2 short sequence motifs (LFa) span residues 835–843 (VFQDEELLF) and 852–858 (DPDVDLF). Disordered stretches follow at residues 862-948 (KKIR…PSSR) and 1014-1225 (AQAD…SKTH). Phosphoserine is present on residues Ser-870 and Ser-873. Positions 874–884 (LFGDDEDDDLF) match the LFa 10 motif. Basic and acidic residues predominate over residues 894-906 (PEKKGTLKKDHPV). The segment covering 908-919 (LKNQDPLDSTQG) has biased composition (polar residues). Residues 932 to 1334 (QDSSGLTPFK…DDPLNAFGSQ (403 aa)) are interaction with phospholipids. The segment covering 1023–1041 (NKSRVKVRGKRRPQTRAAR) has biased composition (basic residues). Residues 1024–1042 (KSRVKVRGKRRPQTRAARR) form a required for interaction with F-actin-capping protein subunit alpha (CAPZA1 or CAPZA2 or CAPZA3) region. Residues Ser-1049, Ser-1067, Ser-1084, and Ser-1109 each carry the phosphoserine modification. Short sequence motifs (LFa) lie at residues 1124–1131 (LFDSGDIF), 1164–1178 (AFPD…EDLF), and 1194–1202 (LLEDEEDLF). A phosphoserine mark is found at Ser-1169, Ser-1172, and Ser-1173. Positions 1203-1225 (ADPRGKKNERKPDSHQDSVSKTH) are enriched in basic and acidic residues. 3 short sequence motifs (LFa) span residues 1227-1233 (IFEDDIF), 1255-1263 (LFDDNIDIF), and 1283-1292 (MFDDDTDDIF). Residues 1294–1334 (SGLQAKASKPKSQSAEAASEQRSEHKVASIFDDPLNAFGSQ) are disordered. Over residues 1297 to 1311 (QAKASKPKSQSAEAA) the composition is skewed to low complexity. The LFa 17 motif lies at 1323–1331 (IFDDPLNAF). Phosphoserine is present on Ser-1333.

It belongs to the FAM21 family. In terms of assembly, component of the WASH core complex also described as WASH regulatory complex (SHRC) composed of WASHC1, WASHC2, WASHC3, WASHC4 and WASHC5; in the complex interacts (via N-terminus) directly with WASHC1. The WASH core complex associates with the F-actin-capping protein dimer (formed by CAPZA1, CAPZA2 or CAPZA3 and CAPZB) in a transient or substoichiometric manner which was initially described as WASH complex. Interacts with VPS35; mediates the association with the retromer CSC complex. Interacts with FKBP15. Interacts with CCDC93, CCDC22, VPS35L; indicative for an association of the WASH core complex with the CCC and retriever complexes. Directly interacts with TBC1D23.

The protein resides in the early endosome membrane. It localises to the cell membrane. Acts as a component of the WASH core complex that functions as a nucleation-promoting factor (NPF) at the surface of endosomes, where it recruits and activates the Arp2/3 complex to induce actin polymerization, playing a key role in the fission of tubules that serve as transport intermediates during endosome sorting. Mediates the recruitment of the WASH core complex to endosome membranes via binding to phospholipids and VPS35 of the retromer CSC. Mediates the recruitment of the F-actin-capping protein dimer to the WASH core complex probably promoting localized F-actin polymerization needed for vesicle scission. Via its C-terminus binds various phospholipids, most strongly phosphatidylinositol 4-phosphate (PtdIns-(4)P), phosphatidylinositol 5-phosphate (PtdIns-(5)P) and phosphatidylinositol 3,5-bisphosphate (PtdIns-(3,5)P2). Involved in the endosome-to-plasma membrane trafficking and recycling of SNX27-retromer-dependent cargo proteins, such as GLUT1. Required for the association of DNAJC13, ENTR1, ANKRD50 with retromer CSC subunit VPS35. Required for the endosomal recruitment of CCC and retriever complexes subunits COMMD1 and CCDC93 as well as the retrievere complex subunit VPS35L. This chain is WASH complex subunit 2, found in Mus musculus (Mouse).